The primary structure comprises 65 residues: Kunitz-type serine protease inhibitor IX (65 aa).

One can recognise a BPTI/Kunitz inhibitor domain in the interval 7–57 (CNLLPETGRCNALIPAFYYNSHLHKCQKFNYGGCGGNANNFKTIDECQRTC). 3 cysteine pairs are disulfide-bonded: C7-C57, C16-C40, and C32-C53.

It belongs to the venom Kunitz-type family. Expressed by the venom gland.

The protein resides in the secreted. Its function is as follows. Dual-function toxin that inhibits both serine proteases (high activity on chymotrypsin (Ki = 18 nM), and low activity on elastase) and voltage-gated potassium channels Kv1.3/KCNA3 (IC(50) = 120.0 nM). The chain is Kunitz-type serine protease inhibitor IX from Bungarus fasciatus (Banded krait).